Here is an 88-residue protein sequence, read N- to C-terminus: MDRPRTPPPSYSEVLMMDVMYGQVSPHASNDTSFVECLPPPQSSRSAWNLWNKRRKTFAFLVLTGLAIAMILFIAFVIYVFNVNRRKK.

Residue Thr6 is modified to Phosphothreonine. A PPXY motif motif is present at residues 8–11 (PPSY). The helical transmembrane segment at 58-78 (FAFLVLTGLAIAMILFIAFVI) threads the bilayer.

Interacts with host ITCH; this interaction probably mediates ITCH degradation. Interacts probably with NEDD4.

It localises to the membrane. Its function is as follows. Down-regulates the TCR/CD3E complex and the transferrin receptor TFRC in host T-cells by blocking them from recycling back to the cell surface. The protein is U24 protein (U24) of Human herpesvirus 6B (strain Z29) (HHV-6 variant B).